The primary structure comprises 78 residues: Putative DNA-binding protein MT0521 (78 aa).

The H-T-H motif DNA-binding region spans 24-45; that stretch reads LLTVAEVAALMRVSKMTVYRLV.

The polypeptide is Putative DNA-binding protein MT0521 (Mycobacterium tuberculosis (strain CDC 1551 / Oshkosh)).